A 390-amino-acid polypeptide reads, in one-letter code: Succinate--CoA ligase [ADP-forming] subunit beta (390 aa).

Positions 9-245 constitute an ATP-grasp domain; sequence KHLLKKYNIP…TTQEDEHETM (237 aa). Residues K46, 53–55, E99, S102, and E107 each bind ATP; that span reads GRG. Residues N200 and D214 each contribute to the Mg(2+) site. Substrate-binding positions include N265 and 322 to 324; that span reads GIV.

Belongs to the succinate/malate CoA ligase beta subunit family. As to quaternary structure, heterotetramer of two alpha and two beta subunits. Requires Mg(2+) as cofactor.

It carries out the reaction succinate + ATP + CoA = succinyl-CoA + ADP + phosphate. The catalysed reaction is GTP + succinate + CoA = succinyl-CoA + GDP + phosphate. The protein operates within carbohydrate metabolism; tricarboxylic acid cycle; succinate from succinyl-CoA (ligase route): step 1/1. Functionally, succinyl-CoA synthetase functions in the citric acid cycle (TCA), coupling the hydrolysis of succinyl-CoA to the synthesis of either ATP or GTP and thus represents the only step of substrate-level phosphorylation in the TCA. The beta subunit provides nucleotide specificity of the enzyme and binds the substrate succinate, while the binding sites for coenzyme A and phosphate are found in the alpha subunit. The chain is Succinate--CoA ligase [ADP-forming] subunit beta from Coxiella burnetii (strain CbuG_Q212) (Coxiella burnetii (strain Q212)).